Reading from the N-terminus, the 213-residue chain is Maleylacetoacetate isomerase (213 aa).

The 82-residue stretch at 3 to 84 folds into the GST N-terminal domain; the sequence is NETVLYDYWR…YLAETRDGTG (82 aa). One can recognise a GST C-terminal domain in the interval 89–213; that stretch reads HPIDRQRVRA…QRAHPDRAKP (125 aa).

The protein belongs to the GST superfamily. Zeta family.

It carries out the reaction 4-maleylacetoacetate = 4-fumarylacetoacetate. It functions in the pathway amino-acid degradation; L-phenylalanine degradation; acetoacetate and fumarate from L-phenylalanine: step 5/6. This Rhizobium meliloti (strain 1021) (Ensifer meliloti) protein is Maleylacetoacetate isomerase (maiA).